The primary structure comprises 356 residues: Glutamine synthetase root isozyme 3 (356 aa).

One can recognise a GS beta-grasp domain in the interval 19-99 (IIAEYIWIGG…VMCDCYTPAG (81 aa)). The region spanning 106–356 (KRYNAAKIFS…IAETTIIWKP (251 aa)) is the GS catalytic domain.

This sequence belongs to the glutamine synthetase family. In terms of assembly, homooctamer. As to expression, found in all the tissues examined with higher expression found in tissues of the root.

The protein localises to the cytoplasm. The enzyme catalyses L-glutamate + NH4(+) + ATP = L-glutamine + ADP + phosphate + H(+). Plays a role in the flow of nitrogen into nitrogenous organic compounds. This Zea mays (Maize) protein is Glutamine synthetase root isozyme 3 (GLN4).